The chain runs to 545 residues: Indole-3-pyruvate decarboxylase (545 aa).

E48 is a thiamine diphosphate binding site. Residues 382 to 460 (DCLFTAMDMI…VILFNNASWE (79 aa)) are thiamine pyrophosphate binding. D429 and N456 together coordinate Mg(2+).

The protein belongs to the TPP enzyme family. It depends on a metal cation as a cofactor. Requires thiamine diphosphate as cofactor.

It carries out the reaction indole-3-pyruvate + H(+) = indole-3-acetaldehyde + CO2. Its pathway is plant hormone metabolism; auxin biosynthesis. The protein is Indole-3-pyruvate decarboxylase (ipdC) of Azospirillum brasilense.